A 521-amino-acid polypeptide reads, in one-letter code: CDP-diacylglycerol--glycerol-3-phosphate 3-phosphatidyltransferase (521 aa).

91-98 (ASLYLGKS) serves as a coordination point for ATP. 2 consecutive PLD phosphodiesterase domains span residues 177-203 (GLGL…SNDY) and 419-457 (NGWS…TRRA). Active-site residues include His182, Lys184, and Asp189.

It belongs to the CDP-alcohol phosphatidyltransferase class-II family.

It is found in the mitochondrion. It carries out the reaction a CDP-1,2-diacyl-sn-glycerol + sn-glycerol 3-phosphate = a 1,2-diacyl-sn-glycero-3-phospho-(1'-sn-glycero-3'-phosphate) + CMP + H(+). It participates in phospholipid metabolism; phosphatidylglycerol biosynthesis; phosphatidylglycerol from CDP-diacylglycerol: step 1/2. Its function is as follows. Essential for the viability of mitochondrial petite mutant. Catalyzes the committed step to the synthesis of the acidic phospholipids. The sequence is that of CDP-diacylglycerol--glycerol-3-phosphate 3-phosphatidyltransferase (PGS1) from Saccharomyces pastorianus (Lager yeast).